We begin with the raw amino-acid sequence, 380 residues long: Protein COS12 (380 aa).

Topologically, residues 1–70 are cytoplasmic; that stretch reads MDGAKFENTV…WKIRGKRHYL (70 aa). A helical membrane pass occupies residues 71 to 91; it reads VIVTALMFEVLYFLWTYSYIF. Residues 92–231 lie on the Extracellular side of the membrane; that stretch reads RERTLGKQVS…KLLWAFKEVT (140 aa). The chain crosses the membrane as a helical span at residues 232–252; sequence IMNSRFAFFSIAYLNGLLTIP. The Cytoplasmic segment spans residues 253–257; it reads RLRNS. A helical membrane pass occupies residues 258 to 278; it reads LHILYVCAVLSSMIIEYLIGI. Residues 279-380 are Extracellular-facing; sequence DKFRFKSMNL…KEAQSACNDV (102 aa).

This sequence belongs to the DUP/COS family.

The protein resides in the membrane. The protein is Protein COS12 (COS12) of Saccharomyces cerevisiae (strain ATCC 204508 / S288c) (Baker's yeast).